Consider the following 360-residue polypeptide: Lipid-A-disaccharide synthase (360 aa).

This sequence belongs to the LpxB family.

The enzyme catalyses a lipid X + a UDP-2-N,3-O-bis[(3R)-3-hydroxyacyl]-alpha-D-glucosamine = a lipid A disaccharide + UDP + H(+). Its pathway is bacterial outer membrane biogenesis; LPS lipid A biosynthesis. Functionally, condensation of UDP-2,3-diacylglucosamine and 2,3-diacylglucosamine-1-phosphate to form lipid A disaccharide, a precursor of lipid A, a phosphorylated glycolipid that anchors the lipopolysaccharide to the outer membrane of the cell. In Helicobacter pylori (strain P12), this protein is Lipid-A-disaccharide synthase.